The following is a 122-amino-acid chain: Large ribosomal subunit protein uL14 (122 aa).

This sequence belongs to the universal ribosomal protein uL14 family. In terms of assembly, part of the 50S ribosomal subunit. Forms a cluster with proteins L3 and L19. In the 70S ribosome, L14 and L19 interact and together make contacts with the 16S rRNA in bridges B5 and B8.

Binds to 23S rRNA. Forms part of two intersubunit bridges in the 70S ribosome. In Beutenbergia cavernae (strain ATCC BAA-8 / DSM 12333 / CCUG 43141 / JCM 11478 / NBRC 16432 / NCIMB 13614 / HKI 0122), this protein is Large ribosomal subunit protein uL14.